The sequence spans 122 residues: UPF0382 membrane protein SH2409 (122 aa).

A run of 4 helical transmembrane segments spans residues 3 to 23, 46 to 66, 69 to 89, and 98 to 118; these read LFII…AFGA, MYHG…SINV, AGWL…ILAL, and ITPI…ISTF.

This sequence belongs to the UPF0382 family.

It localises to the cell membrane. This is UPF0382 membrane protein SH2409 from Staphylococcus haemolyticus (strain JCSC1435).